Here is a 996-residue protein sequence, read N- to C-terminus: P3N-PIPO polyprotein (996 aa).

Residues Val173–Tyr313 enclose the Peptidase S30 domain. Residues His226, Glu235, and Ser267 each act as for P1 proteinase activity in the active site. Positions Lys365–Cys368 match the Involved in interaction with stylet and aphid transmission motif. An Involved in virions binding and aphid transmission motif is present at residues Pro621–Lys623. One can recognise a Peptidase C6 domain in the interval Met647 to Gly769. Active-site for helper component proteinase activity residues include Cys655 and His728.

This sequence belongs to the potyviridae P3N-PIPO polyprotein family. In terms of assembly, interacts (via PIPO domain) with host PCaP1 protein; this interaction may help to anchor the movement complex to the plasma membrane from which the complex could move to the plasmodesmata. In terms of processing, potyviral RNA is expressed as two polyproteins which undergo post-translational proteolytic processing. Genome polyprotein is processed by NIa-pro, P1 and HC-pro proteinases resulting in the production of at least ten individual proteins. P3N-PIPO is cleaved by P1 and HC-pro proteinases resulting in the production of three individual proteins. The P1 proteinase and the HC-pro cleave only their respective C-termini autocatalytically.

Its subcellular location is the host cell junction. The protein localises to the host plasmodesma. It catalyses the reaction Hydrolyzes a Gly-|-Gly bond at its own C-terminus, commonly in the sequence -Tyr-Xaa-Val-Gly-|-Gly, in the processing of the potyviral polyprotein.. Its function is as follows. Required for aphid transmission and also has proteolytic activity. Only cleaves a Gly-Gly dipeptide at its own C-terminus. Interacts with virions and aphid stylets. Acts as a suppressor of RNA-mediated gene silencing, also known as post-transcriptional gene silencing (PTGS), a mechanism of plant viral defense that limits the accumulation of viral RNAs. May have RNA-binding activity. Functionally, allows efficient cell to cell propagation, by bypassing the host cell wall barrier. Transports viral genome to neighboring plant cells directly through plasmosdesmata, without any budding. The sequence is that of P3N-PIPO polyprotein from Zucchini yellow mosaic virus (strain Reunion Island) (ZYMV).